Reading from the N-terminus, the 81-residue chain is Large ribosomal subunit protein bL31B (81 aa).

Belongs to the bacterial ribosomal protein bL31 family. Type B subfamily. As to quaternary structure, part of the 50S ribosomal subunit.

In Bacillus anthracis (strain A0248), this protein is Large ribosomal subunit protein bL31B.